Consider the following 166-residue polypeptide: 2-C-methyl-D-erythritol 2,4-cyclodiphosphate synthase (166 aa).

A divalent metal cation is bound by residues Asp-15 and His-17. 4-CDP-2-C-methyl-D-erythritol 2-phosphate is bound by residues 15–17 (DIH) and 43–44 (HS). A divalent metal cation is bound at residue His-51. 4-CDP-2-C-methyl-D-erythritol 2-phosphate-binding positions include 65–67 (DIG), 141–144 (TTNE), and Arg-151.

Belongs to the IspF family. In terms of assembly, homotrimer. A divalent metal cation is required as a cofactor.

It carries out the reaction 4-CDP-2-C-methyl-D-erythritol 2-phosphate = 2-C-methyl-D-erythritol 2,4-cyclic diphosphate + CMP. It functions in the pathway isoprenoid biosynthesis; isopentenyl diphosphate biosynthesis via DXP pathway; isopentenyl diphosphate from 1-deoxy-D-xylulose 5-phosphate: step 4/6. In terms of biological role, involved in the biosynthesis of isopentenyl diphosphate (IPP) and dimethylallyl diphosphate (DMAPP), two major building blocks of isoprenoid compounds. Catalyzes the conversion of 4-diphosphocytidyl-2-C-methyl-D-erythritol 2-phosphate (CDP-ME2P) to 2-C-methyl-D-erythritol 2,4-cyclodiphosphate (ME-CPP) with a corresponding release of cytidine 5-monophosphate (CMP). This is 2-C-methyl-D-erythritol 2,4-cyclodiphosphate synthase from Prochlorococcus marinus (strain MIT 9215).